An 874-amino-acid polypeptide reads, in one-letter code: MTISHIDPEYQANTIEPSVQQDWENRKVFKVADTVEGKHRYILSMFPYPSGKLHMGHVRNYTIGDVISRFYRLKGETVLQPMGWDAFGLPAENAAIAHKVAPAKWTFENIAYMRDQLKKLGLSVDWDREFATCTPEYYHWEQWLFVQLYKKGLIYRKLSTVNWDPVDQTVLANEQVENGRGWRSGALVEKRDIPMYYFRITDYAQELLDDLDTLQDGWPQQVLTMQRNWIGRSTGMEITFPSANTEIYADGLTVYTTRADTLMGVTYVAVAAEHPLALKAAENNPELAAFIEECRIGSVAEADLATAEKKGMATGLFVKHPVTGEELPVWIANYVLMSYGSGAVMAVPAHDERDFEFANKFNLPIKQVIDAKGADDADYSATEWQEWYGSKEGKLVNSGEFDGLEFQAAFDAFLAKLEPQGLANSKVQFRLRDWGVSRQRYWGCPIPMINCDTCGQVTVPEDQLPVVLPTDVVPDGSGNPLNKMPEFYETKCPCCGGDARRETDTLDTFVESSWYYARYASPDFTGGIVKPEAAKNWLPVNQYIGGVEHAILHLLYARFFHKLMHDEGVVQGNEPFTNLLTQGMVLADTFYREAENGKKTWFNPANIELERDEKGRIISAKYSGDGQEVIIGGQEKMSKSKNNGIDPQAIIDQYGADTARVFMMFAAPPDQSLEWSDAGVEGANRFLKRVWRLVASFLEKGNSATAIDKANLSKDAQDLRRKTHETIQKVSDDIERRHAFNTAIAALMELLNASNKFEAKDDNDVAVEREAITTLLTLLAPFAPHLSQTLLAQFGTDLTEATFPEVDASALTRNTQTIVVQVNGKLRGKLEVSVDISKDELLAQAKALPEVQQFLTGPTKKEIVVPNKLVNLVV.

The 'HIGH' region motif lies at 47–57 (PYPSGKLHMGH). A 'KMSKS' region motif is present at residues 636–640 (KMSKS). Lys-639 provides a ligand contact to ATP.

It belongs to the class-I aminoacyl-tRNA synthetase family.

The protein resides in the cytoplasm. It catalyses the reaction tRNA(Leu) + L-leucine + ATP = L-leucyl-tRNA(Leu) + AMP + diphosphate. The polypeptide is Leucine--tRNA ligase (Acinetobacter baumannii (strain SDF)).